The chain runs to 144 residues: MLMPKRVKHRKVQRGRMKGKATRGNFLAYGDYGIQALTCGWITSNQIESARIAINRYIKRGGKLWIKIFPDKPVTEKPAETRMGSGKGSPEYWVAVVKPGRVLFELSGVPEETAREAMRLASHKLPVKTKFVSKRDFEEMGGEE.

The protein belongs to the universal ribosomal protein uL16 family. Part of the 50S ribosomal subunit.

Its function is as follows. Binds 23S rRNA and is also seen to make contacts with the A and possibly P site tRNAs. This is Large ribosomal subunit protein uL16 from Clostridium beijerinckii (strain ATCC 51743 / NCIMB 8052) (Clostridium acetobutylicum).